Consider the following 162-residue polypeptide: Ribosome maturation factor RimP (162 aa).

The protein belongs to the RimP family.

It localises to the cytoplasm. Its function is as follows. Required for maturation of 30S ribosomal subunits. This Leptospira biflexa serovar Patoc (strain Patoc 1 / Ames) protein is Ribosome maturation factor RimP.